Reading from the N-terminus, the 149-residue chain is MAEERSKDDIPDWWEKEWVEFRYRGYTLGELMKMPIEEFIELLPARQRRSLKRGLPSRHKKLLRKVRRARRLLRRGKKPPVIRTHCRDMIILPEMVGLTIAVYNGKEFKEVKIEPEMIGHYLGEFAKTRKTVEHGGIGATRSSLFVPLK.

It belongs to the universal ribosomal protein uS19 family.

Functionally, protein S19 forms a complex with S13 that binds strongly to the 16S ribosomal RNA. The polypeptide is Small ribosomal subunit protein uS19 (Methanopyrus kandleri (strain AV19 / DSM 6324 / JCM 9639 / NBRC 100938)).